A 143-amino-acid chain; its full sequence is UPF0260 protein plu2141 (143 aa).

This sequence belongs to the UPF0260 family.

This is UPF0260 protein plu2141 from Photorhabdus laumondii subsp. laumondii (strain DSM 15139 / CIP 105565 / TT01) (Photorhabdus luminescens subsp. laumondii).